Consider the following 897-residue polypeptide: Macoilin (897 aa).

The next 4 helical transmembrane spans lie at 113 to 133, 157 to 177, 181 to 201, and 204 to 224; these read ICYLFIPIRMLIFLATTYVWI, QSWPIVFITCFIVIFELFLRI, PILISFFPNVAEYAGVSPVWP, and LNAFFGAHSIGYPVILITVSM. Polar residues-rich tracts occupy residues 291-304 and 329-338; these read IQAASATPPTSSKK and GNSGFNSTPP. The interval 291 to 375 is disordered; sequence IQAASATPPT…DTSSSTIEDQ (85 aa). A compositionally biased stretch (acidic residues) spans 351–361; the sequence is DMDDGDDSDDD. A helical transmembrane segment spans residues 379–399; it reads GGISIIRFIFSSAAWLFSFVF. Over residues 403–413 the composition is skewed to polar residues; it reads TPSENSLSNQQ. Disordered stretches follow at residues 403–535 and 724–770; these read TPSE…QEED and NGSS…SPVP. Acidic residues predominate over residues 414–424; sequence IDDDEDYEDGD. A compositionally biased stretch (polar residues) spans 432-451; sequence TDSMTSTTKGRANTMPSTTR. Low complexity-rich tracts occupy residues 452 to 467 and 475 to 490; these read SQNNNNSQKQQKQSNG and SHQNNHQKSNGNSNGH. Positions 503-726 form a coiled coil; it reads DTNASNETDI…VQEFQIKNGS (224 aa). Positions 510–535 are enriched in basic and acidic residues; sequence TDIRSMSRELESLRSEISSRRSQEED. Over residues 734-761 the composition is skewed to polar residues; that stretch reads ETLMNGRSSTEANNENDTTASDQSSPHQ.

In terms of tissue distribution, strong expression in many neurons, very weak expression is also detected in others tissues.

The protein resides in the rough endoplasmic reticulum membrane. It is found in the nucleus membrane. In terms of biological role, plays a role in the regulation of neuronal activity. In AWA and AWC neurons, plays a role in regulating olfactory adaptation by controlling the forgetting sensory responses to odorants such as diacetyl and isoamyl alcohol. May play a role in regulating daf-7 expression in ASI neurons in response to bacterial small RNAs. In ASI neurons, promotes dauer formation in response to pheromones such as the ascarosides ascr#2 and ascr#3. The chain is Macoilin from Caenorhabditis elegans.